A 206-amino-acid polypeptide reads, in one-letter code: Small ribosomal subunit protein uS4 (206 aa).

Residues 96-158 (GRLDNVVYRM…AKKQSRIKAA (63 aa)) enclose the S4 RNA-binding domain.

It belongs to the universal ribosomal protein uS4 family. In terms of assembly, part of the 30S ribosomal subunit. Contacts protein S5. The interaction surface between S4 and S5 is involved in control of translational fidelity.

Its function is as follows. One of the primary rRNA binding proteins, it binds directly to 16S rRNA where it nucleates assembly of the body of the 30S subunit. With S5 and S12 plays an important role in translational accuracy. The sequence is that of Small ribosomal subunit protein uS4 from Vibrio cholerae serotype O1 (strain ATCC 39541 / Classical Ogawa 395 / O395).